The following is a 214-amino-acid chain: Thymidylate kinase (214 aa).

9–16 (GVDGSGKS) serves as a coordination point for ATP.

Belongs to the thymidylate kinase family.

It carries out the reaction dTMP + ATP = dTDP + ADP. Phosphorylation of dTMP to form dTDP in both de novo and salvage pathways of dTTP synthesis. This chain is Thymidylate kinase, found in Symbiobacterium thermophilum (strain DSM 24528 / JCM 14929 / IAM 14863 / T).